The chain runs to 180 residues: Large ribosomal subunit protein uL5 (180 aa).

The protein belongs to the universal ribosomal protein uL5 family. In terms of assembly, part of the 50S ribosomal subunit; part of the 5S rRNA/L5/L18/L25 subcomplex. Contacts the 5S rRNA and the P site tRNA. Forms a bridge to the 30S subunit in the 70S ribosome.

In terms of biological role, this is one of the proteins that bind and probably mediate the attachment of the 5S RNA into the large ribosomal subunit, where it forms part of the central protuberance. In the 70S ribosome it contacts protein S13 of the 30S subunit (bridge B1b), connecting the 2 subunits; this bridge is implicated in subunit movement. Contacts the P site tRNA; the 5S rRNA and some of its associated proteins might help stabilize positioning of ribosome-bound tRNAs. This Mesoplasma florum (strain ATCC 33453 / NBRC 100688 / NCTC 11704 / L1) (Acholeplasma florum) protein is Large ribosomal subunit protein uL5.